A 477-amino-acid polypeptide reads, in one-letter code: ATP synthase subunit beta (477 aa).

163-170 is an ATP binding site; sequence GGAGVGKT.

It belongs to the ATPase alpha/beta chains family. F-type ATPases have 2 components, CF(1) - the catalytic core - and CF(0) - the membrane proton channel. CF(1) has five subunits: alpha(3), beta(3), gamma(1), delta(1), epsilon(1). CF(0) has four main subunits: a(1), b(1), b'(1) and c(9-12).

Its subcellular location is the cellular thylakoid membrane. The enzyme catalyses ATP + H2O + 4 H(+)(in) = ADP + phosphate + 5 H(+)(out). Its function is as follows. Produces ATP from ADP in the presence of a proton gradient across the membrane. The catalytic sites are hosted primarily by the beta subunits. The sequence is that of ATP synthase subunit beta from Synechococcus sp. (strain JA-3-3Ab) (Cyanobacteria bacterium Yellowstone A-Prime).